The primary structure comprises 166 residues: Small ribosomal subunit protein bS6 (166 aa).

Composition is skewed to basic and acidic residues over residues 96-142 and 149-166; these read HEEG…DRPP and GGDRGPRRPREGFEGGAE. The tract at residues 96-166 is disordered; sequence HEEGPSAMMQ…PREGFEGGAE (71 aa).

It belongs to the bacterial ribosomal protein bS6 family.

Binds together with bS18 to 16S ribosomal RNA. In Mesorhizobium japonicum (strain LMG 29417 / CECT 9101 / MAFF 303099) (Mesorhizobium loti (strain MAFF 303099)), this protein is Small ribosomal subunit protein bS6.